An 880-amino-acid polypeptide reads, in one-letter code: Alanine--tRNA ligase (880 aa).

Zn(2+) is bound by residues H567, H571, C669, and H673.

Belongs to the class-II aminoacyl-tRNA synthetase family. It depends on Zn(2+) as a cofactor.

The protein localises to the cytoplasm. It catalyses the reaction tRNA(Ala) + L-alanine + ATP = L-alanyl-tRNA(Ala) + AMP + diphosphate. Catalyzes the attachment of alanine to tRNA(Ala) in a two-step reaction: alanine is first activated by ATP to form Ala-AMP and then transferred to the acceptor end of tRNA(Ala). Also edits incorrectly charged Ser-tRNA(Ala) and Gly-tRNA(Ala) via its editing domain. This chain is Alanine--tRNA ligase, found in Bacillus cereus (strain ZK / E33L).